We begin with the raw amino-acid sequence, 127 residues long: Aspartate 1-decarboxylase (127 aa).

The active-site Schiff-base intermediate with substrate; via pyruvic acid is Ser25. Ser25 is modified (pyruvic acid (Ser)). Thr57 is a binding site for substrate. Tyr58 (proton donor) is an active-site residue. 73–75 (GAA) is a substrate binding site.

This sequence belongs to the PanD family. As to quaternary structure, heterooctamer of four alpha and four beta subunits. Requires pyruvate as cofactor. Post-translationally, is synthesized initially as an inactive proenzyme, which is activated by self-cleavage at a specific serine bond to produce a beta-subunit with a hydroxyl group at its C-terminus and an alpha-subunit with a pyruvoyl group at its N-terminus.

The protein localises to the cytoplasm. The catalysed reaction is L-aspartate + H(+) = beta-alanine + CO2. It participates in cofactor biosynthesis; (R)-pantothenate biosynthesis; beta-alanine from L-aspartate: step 1/1. Functionally, catalyzes the pyruvoyl-dependent decarboxylation of aspartate to produce beta-alanine. The chain is Aspartate 1-decarboxylase from Vesicomyosocius okutanii subsp. Calyptogena okutanii (strain HA).